A 303-amino-acid polypeptide reads, in one-letter code: Methyltransferase ktnA (303 aa).

It belongs to the class I-like SAM-binding methyltransferase superfamily. S-adenosyl-L-methionine is required as a cofactor.

Its function is as follows. Non-reducing polyketide synthase; part of the gene cluster that mediates the biosynthesis of the bicoumarin kotanin. The non-reducing polyketide synthase ktnS first catalyzes the formation of the pentaketidic 4,7-dihydroxy-5-methylcoumarin from acetyl coenzyme A and 4 malonyl coenzyme A molecules. Further O-methylation by ktnB leads to the formation of 7-demethylsiderin. Then, an oxidative phenol coupling catalyzed by the cytochrome P450 monooxygenase ktnC forms the 8,8'-dimer P-orlandin via dimerization the monomeric precursor, 7-demethylsiderin. P-orlandin is subsequently O-methylated in a stepwise fashion to demethylkotanin and kotanin. The function of ktnA within the pathway has not been determined yet. This chain is Methyltransferase ktnA, found in Aspergillus niger (strain ATCC MYA-4892 / CBS 513.88 / FGSC A1513).